Here is a 202-residue protein sequence, read N- to C-terminus: uncharacterized protein (202 aa).

This is an uncharacterized protein from Dictyostelium discoideum (Social amoeba).